The chain runs to 432 residues: Enolase (432 aa).

Q164 is a (2R)-2-phosphoglycerate binding site. E206 functions as the Proton donor in the catalytic mechanism. Positions 243, 289, and 316 each coordinate Mg(2+). Residues K341, R370, S371, and K392 each coordinate (2R)-2-phosphoglycerate. Residue K341 is the Proton acceptor of the active site.

It belongs to the enolase family. Mg(2+) is required as a cofactor.

Its subcellular location is the cytoplasm. It is found in the secreted. The protein localises to the cell surface. It catalyses the reaction (2R)-2-phosphoglycerate = phosphoenolpyruvate + H2O. It participates in carbohydrate degradation; glycolysis; pyruvate from D-glyceraldehyde 3-phosphate: step 4/5. Its function is as follows. Catalyzes the reversible conversion of 2-phosphoglycerate (2-PG) into phosphoenolpyruvate (PEP). It is essential for the degradation of carbohydrates via glycolysis. This chain is Enolase, found in Borrelia duttonii (strain Ly).